The sequence spans 34 residues: DDIT3 upstream open reading frame protein (34 aa).

In terms of assembly, interacts with DDIT3 (isoform 1).

The protein localises to the nucleus. It localises to the cytoplasm. Its function is as follows. Product of the upstream open reading frame (uORF) of DDIT3/CHOP that is specifically produced in absence of stress, thereby preventing translation of downstream stress effector DDIT3/CHOP. This is DDIT3 upstream open reading frame protein from Homo sapiens (Human).